Consider the following 629-residue polypeptide: Rho GTPase-activating protein conundrum (629 aa).

Positions 185-294 (PPKSGTYADI…CRDSSSLDSC (110 aa)) are required for interaction with Moe. Residues 237 to 261 (SIGRSKESRSENDARSQKKKSSEVL) form a disordered region. Positions 240-258 (RSKESRSENDARSQKKKSS) are enriched in basic and acidic residues. Residues 359-565 (VSINALIRRD…ILILRGEKLF (207 aa)) form the Rho-GAP domain.

In terms of assembly, interacts with Moe (via FERM domain).

Its subcellular location is the cytoplasm. The protein resides in the cell membrane. It is found in the cell cortex. It localises to the cell junction. GTPase-activating protein (GAP) for Rho1; functions with the ERM protein Moe to regulate Rho1 and control proliferation in the developing epithelium. Recruited by Moe to the cell cortex where it negatively regulates Rho1 activity. Can also promote cell proliferation independently of its GAP activity, perhaps by acting with Arf6 to positively regulate Rac1. The sequence is that of Rho GTPase-activating protein conundrum from Drosophila melanogaster (Fruit fly).